Consider the following 321-residue polypeptide: Nodulation protein D 1 (321 aa).

One can recognise an HTH lysR-type domain in the interval 6–63; sequence LDLNLLVALDALMTERKLTAAARSINLSQPAMSAAITRLRTYFRDELFTMNGRELVPT. The H-T-H motif DNA-binding region spans 23–42; that stretch reads LTAAARSINLSQPAMSAAIT.

It belongs to the LysR transcriptional regulatory family.

Functionally, nodD regulates the expression of the nodABCFE genes which encode other nodulation proteins. NodD is also a negative regulator of its own expression. Binds flavonoids as inducers. The polypeptide is Nodulation protein D 1 (nodD1) (Bradyrhizobium japonicum).